The primary structure comprises 127 residues: Dual endothelin-1/VEGF signal peptide receptor (127 aa).

The Extracellular portion of the chain corresponds to 1–65 (MNALYVTTVP…EMKSRWNWGS (65 aa)). Residues 66 to 84 (ITCIICFTCVGSQLSMSSS) traverse the membrane as a helical segment. Over 85–127 (KASNFSGPLQLYQRGIGHITNSYKRPQAPAWPCLSSGTMGRSH) the chain is Cytoplasmic.

As to expression, widely expressed with higher levels in kidney and aorta.

It is found in the cell membrane. Dual receptor for both endothelin-1 and the signal sequence of vascular endothelial growth factor A. Does not act as a receptor for angiotensin-2. Does not bind the VEGFA mature protein. May play a role in angiogenesis with a significant role in cardiovascular and neural development. The protein is Dual endothelin-1/VEGF signal peptide receptor of Mus musculus (Mouse).